The primary structure comprises 183 residues: Ribose 1,5-bisphosphate phosphokinase PhnN (183 aa).

6 to 13 (GPSGAGKD) lines the ATP pocket.

This sequence belongs to the ribose 1,5-bisphosphokinase family.

The enzyme catalyses alpha-D-ribose 1,5-bisphosphate + ATP = 5-phospho-alpha-D-ribose 1-diphosphate + ADP. It functions in the pathway metabolic intermediate biosynthesis; 5-phospho-alpha-D-ribose 1-diphosphate biosynthesis; 5-phospho-alpha-D-ribose 1-diphosphate from D-ribose 5-phosphate (route II): step 3/3. Catalyzes the phosphorylation of ribose 1,5-bisphosphate to 5-phospho-D-ribosyl alpha-1-diphosphate (PRPP). The chain is Ribose 1,5-bisphosphate phosphokinase PhnN from Agrobacterium fabrum (strain C58 / ATCC 33970) (Agrobacterium tumefaciens (strain C58)).